The sequence spans 188 residues: UPF0488 protein C8orf33 homolog (188 aa).

Disordered stretches follow at residues 1 to 65 (MAAP…AEAQ), 87 to 112 (QRPT…TPLP), and 144 to 182 (AHSA…RDEE). Position 2 is an N-acetylalanine (alanine 2). Position 41 is a phosphoserine (serine 41). A compositionally biased stretch (basic and acidic residues) spans 166-182 (PRPEGRSKGTSDTRDEE).

This sequence belongs to the UPF0488 family.

The chain is UPF0488 protein C8orf33 homolog from Bos taurus (Bovine).